The sequence spans 189 residues: Putative biopolymer transport protein ExbB-like 1 (189 aa).

Helical transmembrane passes span 14–34 (FVTT…LWVF), 99–119 (LVVL…GTVV), and 147–167 (LIAT…YLIL).

The protein belongs to the ExbB/TolQ family.

The protein localises to the cell inner membrane. This chain is Putative biopolymer transport protein ExbB-like 1, found in Helicobacter pylori (strain J99 / ATCC 700824) (Campylobacter pylori J99).